Here is a 416-residue protein sequence, read N- to C-terminus: 3-isopropylmalate dehydratase large subunit (416 aa).

Residues Cys297, Cys357, and Cys360 each coordinate [4Fe-4S] cluster.

This sequence belongs to the aconitase/IPM isomerase family. LeuC type 2 subfamily. As to quaternary structure, heterodimer of LeuC and LeuD. [4Fe-4S] cluster is required as a cofactor.

It catalyses the reaction (2R,3S)-3-isopropylmalate = (2S)-2-isopropylmalate. It participates in amino-acid biosynthesis; L-leucine biosynthesis; L-leucine from 3-methyl-2-oxobutanoate: step 2/4. In terms of biological role, catalyzes the isomerization between 2-isopropylmalate and 3-isopropylmalate, via the formation of 2-isopropylmaleate. The polypeptide is 3-isopropylmalate dehydratase large subunit (Methanoregula boonei (strain DSM 21154 / JCM 14090 / 6A8)).